The chain runs to 406 residues: Peptidase T (406 aa).

Zn(2+) is bound at residue His82. Asp84 is a catalytic residue. Asp142 provides a ligand contact to Zn(2+). The active-site Proton acceptor is Glu176. Glu177, Asp199, and His381 together coordinate Zn(2+).

This sequence belongs to the peptidase M20B family. Zn(2+) is required as a cofactor.

The protein localises to the cytoplasm. It catalyses the reaction Release of the N-terminal residue from a tripeptide.. Cleaves the N-terminal amino acid of tripeptides. The protein is Peptidase T of Streptococcus agalactiae serotype III (strain NEM316).